The chain runs to 246 residues: Ribosomal RNA large subunit methyltransferase E (246 aa).

S-adenosyl-L-methionine-binding residues include G81, W83, D104, D120, and D144. K184 functions as the Proton acceptor in the catalytic mechanism.

The protein belongs to the class I-like SAM-binding methyltransferase superfamily. RNA methyltransferase RlmE family.

The protein resides in the cytoplasm. It catalyses the reaction uridine(2552) in 23S rRNA + S-adenosyl-L-methionine = 2'-O-methyluridine(2552) in 23S rRNA + S-adenosyl-L-homocysteine + H(+). In terms of biological role, specifically methylates the uridine in position 2552 of 23S rRNA at the 2'-O position of the ribose in the fully assembled 50S ribosomal subunit. The sequence is that of Ribosomal RNA large subunit methyltransferase E from Agrobacterium fabrum (strain C58 / ATCC 33970) (Agrobacterium tumefaciens (strain C58)).